A 225-amino-acid chain; its full sequence is Riboflavin kinase (225 aa).

Positions 1-89 are unknown; that stretch reads MPDIEYLKKL…SRIFSSEPDT (89 aa). Positions 90–225 are riboflavin kinase; that stretch reads LELEGNVLKG…LKKQGMEGQK (136 aa). CDP is bound at residue 99 to 104; it reads GLGEGQ. 2 residues coordinate Mg(2+): T128 and N130. Positions 185 and 193 each coordinate FMN. 198–201 is a CDP binding site; sequence VKLR.

Belongs to the archaeal riboflavin kinase family. Mg(2+) serves as cofactor.

The enzyme catalyses riboflavin + CTP = CDP + FMN + H(+). The protein operates within cofactor biosynthesis; FMN biosynthesis; FMN from riboflavin (CTP route): step 1/1. Functionally, catalyzes the CTP-dependent phosphorylation of riboflavin (vitamin B2) to form flavin mononucleotide (FMN). In Methanosarcina mazei (strain ATCC BAA-159 / DSM 3647 / Goe1 / Go1 / JCM 11833 / OCM 88) (Methanosarcina frisia), this protein is Riboflavin kinase (ribK).